The sequence spans 213 residues: MGSNYIVIEGLEGAGKTTARDVVVETLEQLGIRNMIFTREPGGTQLAEKLRSLVLDIRSVGDEVITDKAEVLMFYAARVQLVETVIKPALAQGIWVIGDRHDLSTQAYQGGGRGIDQTMLATLRDAVLGDFRPDLTLYLDVTPEVGLKRARARGDLDRIEQESFDFFNRTRARYLELAAQDSRIRTIDATQPLDAVMRDIRATVTKWVQEQAA.

ATP is bound at residue 10–17 (GLEGAGKT).

It belongs to the thymidylate kinase family.

The catalysed reaction is dTMP + ATP = dTDP + ADP. Its function is as follows. Phosphorylation of dTMP to form dTDP in both de novo and salvage pathways of dTTP synthesis. This Salmonella choleraesuis (strain SC-B67) protein is Thymidylate kinase.